The primary structure comprises 818 residues: H(+)/Cl(-) exchange transporter 3 (818 aa).

Residues 1 to 125 are Cytoplasmic-facing; that stretch reads MESEQLFHRG…WEMTKSLYDA (125 aa). Short sequence motifs (di-leucine internalization motif; mediates targeting to late endosome and lysosome membranes) lie at residues 28–29, 46–47, and 71–75; these read LL and LLDLL. Residues 126–163 form a helical membrane-spanning segment; that stretch reads WSGWLVVTLTGLASGALAGLIDIAADWMTDLKEGICLS. Asn-177 carries N-linked (GlcNAc...) asparagine glycosylation. A helical membrane pass occupies residues 209–232; sequence MNYIMYIFWALSFAFLAVSLVKVF. Positions 238-242 match the Selectivity filter part_1 motif; it reads GSGIP. Ser-239 provides a ligand contact to chloride. The helical intramembrane region spans 241 to 248; sequence IPEIKTIL. A run of 2 helical transmembrane segments spans residues 258–276 and 282–301; these read GKWT…VASG and EGPL…YLFP. Residues 280–284 carry the Selectivity filter part_2 motif; that stretch reads GKEGP. Intramembrane regions (helical) lie at residues 313–325 and 329–337; these read VLSA…VSVA and PIGGVLFSL. A run of 3 helical transmembrane segments spans residues 349–367, 391–416, and 423–443; these read LWRS…RSIN, FPFI…AWCR, and FGKY…VIAF. Residues Asn-451 and Asn-479 are each glycosylated (N-linked (GlcNAc...) asparagine). Helical transmembrane passes span 500 to 520 and 525 to 544; these read IWQL…TFGI and GLFI…VGIA. The Selectivity filter part_3 signature appears at 525–529; sequence GLFIP. Phe-527 is a binding site for chloride. Intramembrane regions (helical) lie at residues 572–586 and 590–601; these read GLYA…LGGV and TVSLVVIVFELT. The note=Loop between two helices intramembrane region spans 602–605; the sequence is GGLE. Residues 606 to 624 traverse the membrane as a helical segment; it reads YIVPLMAAVMTSKWVGDAF. Over 625 to 818 the chain is Cytoplasmic; the sequence is GREGIYEAHI…NQDPASIMFN (194 aa). Residue Tyr-630 coordinates chloride. 2 CBS domains span residues 658–722 and 755–812; these read MRPR…ARKK and LDMS…NQDP. ATP contacts are provided by residues 689–691 and 796–799; these read YNG and TKKD.

It belongs to the chloride channel (TC 2.A.49) family. ClC-3/CLCN3 subfamily. As to quaternary structure, monomer and homodimer. Forms heterodimers with CLCN4. Interacts with GOPC, PDZK1 and NHERF1/EBP50. In terms of processing, N-glycosylated. Expressed primarily in tissues derived from neuroectoderm. Within the brain, its expression is particularly evident in the hippocampus, olfactory cortex, and olfactory bulb. Highly expressed in aortic and coronary vascular smooth muscle cells, and aortic endothelial cells. Also expressed in tracheal and alveolar epithelial cells, and intima and media of the pulmonary vessels. Expressed in bronchus and colon (at protein level).

The protein localises to the early endosome membrane. Its subcellular location is the late endosome membrane. The protein resides in the lysosome membrane. It is found in the cell membrane. It localises to the golgi apparatus membrane. The protein localises to the cell projection. Its subcellular location is the ruffle membrane. Strongly outwardly rectifying, electrogenic H(+)/Cl(-)exchanger which mediates the exchange of chloride ions against protons. The CLC channel family contains both chloride channels and proton-coupled anion transporters that exchange chloride or another anion for protons. The presence of conserved gating glutamate residues is typical for family members that function as antiporters. In terms of biological role, strongly outwardly rectifying, electrogenic H(+)/Cl(-)exchanger which mediates the exchange of chloride ions against protons. In Homo sapiens (Human), this protein is H(+)/Cl(-) exchange transporter 3 (CLCN3).